The chain runs to 391 residues: UPF0229 protein BCB4264_A0587 (391 aa).

The segment covering 1–16 has biased composition (polar residues); that stretch reads MGEENQPNYTISQENW. Disordered stretches follow at residues 1–31 and 80–117; these read MGEENQPNYTISQENWSLHRKGYDDQQRHQE and HVGQGNGDSKVGDVVARDGSGGQKQKGPGKGQGAGDAA. Positions 21–31 are enriched in basic and acidic residues; it reads KGYDDQQRHQE. The segment covering 98-115 has biased composition (gly residues); the sequence is GSGGQKQKGPGKGQGAGD.

This sequence belongs to the UPF0229 family.

The chain is UPF0229 protein BCB4264_A0587 from Bacillus cereus (strain B4264).